A 476-amino-acid chain; its full sequence is DnaJ protein P58IPK homolog A (476 aa).

Positions 1 to 28 (MVAMARWPWRVLLPLLLLHSSPVFFVFA) are cleaved as a signal peptide. TPR repeat units lie at residues 36-69 (PSTLFKRALEMMNLRKYDGSLGLLNAVLEVEPNH), 70-103 (SEAYRQRASVLRHKCRYKEAEGDYSKYLELKPGS), 116-150 (AQNALESAYGQFESHDFSKVLDYINKIVLVFSPDC), 152-184 (KAKLLKAKALLALKDYSTVISETGFILKEDEDN), 185-218 (LDALLLRGRAYYYLADHDVASRHYQKGLRLDPEH), 231-264 (LVKKTKSAEDNAAKGKLRVSAEDYKASLAMDPDH), 269-302 (VHLYLGLCKVLVKLGRGKEAISSCTEALNIDGEL), and 304-336 (DALTQRGEAKLLTEDWEGAVQDLKEAAQKSPQD). Residues 357 to 423 (DWYKILGISK…DKRVRYDRGE (67 aa)) enclose the J domain.

Interacts with BIP1.

It localises to the endoplasmic reticulum lumen. May play a role in protein folding in the endoplasmic reticulum. This Oryza sativa subsp. japonica (Rice) protein is DnaJ protein P58IPK homolog A.